We begin with the raw amino-acid sequence, 293 residues long: Taste receptor type 2 member 143 (293 aa).

Over 1-6 (MPSTPT) the chain is Extracellular. The helical transmembrane segment at 7–27 (LIFIIIFYLVSLASMLQNGFM) threads the bilayer. Residues 28-55 (MIVLGREWMRNRTLPAADMIVASLASSR) are Cytoplasmic-facing. The helical transmembrane segment at 56–76 (FCLHGIAILANLLASFDFCYQ) threads the bilayer. Topologically, residues 77–79 (ANL) are extracellular. Residues 80-100 (IGILWDFTNTLIFWLTAWLAI) form a helical membrane-spanning segment. The Cytoplasmic segment spans residues 101–127 (FYCVKISSFSHPVLFWLKWRISQLVPR). A helical transmembrane segment spans residues 128–148 (LLVVSLIIGGLSAVISATGNF). At 149–181 (MANQMTISQGFHGNCTFGHMSLDFYRYYYLYHS) the chain is on the extracellular side. Asn-162 carries an N-linked (GlcNAc...) asparagine glycan. A helical transmembrane segment spans residues 182 to 202 (VLMWFTPFFLFLVSVIVLMFS). Residues 203-227 (LYQHVEKMRGHRPGPWDLHTQAHTM) are Cytoplasmic-facing. The helical transmembrane segment at 228–248 (ALKSLTFFFIFYIFFFLALVI) threads the bilayer. At 249 to 264 (SSTKRKSMQSYYWARE) the chain is on the extracellular side. A helical membrane pass occupies residues 265–285 (AIIYTGIFLNSIILLFSNPKL). The Cytoplasmic portion of the chain corresponds to 286–293 (RKALKMRF).

It belongs to the G-protein coupled receptor T2R family.

The protein resides in the membrane. Functionally, putative taste receptor which may play a role in the perception of bitterness. In Mus musculus (Mouse), this protein is Taste receptor type 2 member 143 (Tas2r143).